The primary structure comprises 140 residues: Ribosomal RNA large subunit methyltransferase H (140 aa).

Residues L55 and G87 each contribute to the S-adenosyl-L-methionine site.

The protein belongs to the RNA methyltransferase RlmH family. In terms of assembly, homodimer.

The protein localises to the cytoplasm. It carries out the reaction pseudouridine(1915) in 23S rRNA + S-adenosyl-L-methionine = N(3)-methylpseudouridine(1915) in 23S rRNA + S-adenosyl-L-homocysteine + H(+). Specifically methylates the pseudouridine at position 1915 (m3Psi1915) in 23S rRNA. The protein is Ribosomal RNA large subunit methyltransferase H of Rhizorhabdus wittichii (strain DSM 6014 / CCUG 31198 / JCM 15750 / NBRC 105917 / EY 4224 / RW1) (Sphingomonas wittichii).